A 253-amino-acid polypeptide reads, in one-letter code: ATP synthase subunit b 2 (253 aa).

A helical membrane pass occupies residues 9–27; sequence VLEIVNFLVLVWLLKRFLY.

It belongs to the ATPase B chain family. As to quaternary structure, F-type ATPases have 2 components, F(1) - the catalytic core - and F(0) - the membrane proton channel. F(1) has five subunits: alpha(3), beta(3), gamma(1), delta(1), epsilon(1). F(0) has three main subunits: a(1), b(2) and c(10-14). The alpha and beta chains form an alternating ring which encloses part of the gamma chain. F(1) is attached to F(0) by a central stalk formed by the gamma and epsilon chains, while a peripheral stalk is formed by the delta and b chains.

It is found in the cell inner membrane. F(1)F(0) ATP synthase produces ATP from ADP in the presence of a proton or sodium gradient. F-type ATPases consist of two structural domains, F(1) containing the extramembraneous catalytic core and F(0) containing the membrane proton channel, linked together by a central stalk and a peripheral stalk. During catalysis, ATP synthesis in the catalytic domain of F(1) is coupled via a rotary mechanism of the central stalk subunits to proton translocation. In terms of biological role, component of the F(0) channel, it forms part of the peripheral stalk, linking F(1) to F(0). The polypeptide is ATP synthase subunit b 2 (Methylococcus capsulatus (strain ATCC 33009 / NCIMB 11132 / Bath)).